The following is a 482-amino-acid chain: Phenylalanine--tRNA ligase alpha subunit (482 aa).

L-phenylalanine contacts are provided by residues Thr-327, 366–368 (QIE), and Tyr-406. Glu-408 is a binding site for Mg(2+). Phe-430 serves as a coordination point for L-phenylalanine.

The protein belongs to the class-II aminoacyl-tRNA synthetase family. Phe-tRNA synthetase alpha subunit type 2 subfamily. In terms of assembly, tetramer of two alpha and two beta subunits. It depends on Mg(2+) as a cofactor.

The protein resides in the cytoplasm. The enzyme catalyses tRNA(Phe) + L-phenylalanine + ATP = L-phenylalanyl-tRNA(Phe) + AMP + diphosphate + H(+). This is Phenylalanine--tRNA ligase alpha subunit from Thermoplasma volcanium (strain ATCC 51530 / DSM 4299 / JCM 9571 / NBRC 15438 / GSS1).